A 150-amino-acid polypeptide reads, in one-letter code: SsrA-binding protein (150 aa).

Belongs to the SmpB family.

The protein localises to the cytoplasm. In terms of biological role, required for rescue of stalled ribosomes mediated by trans-translation. Binds to transfer-messenger RNA (tmRNA), required for stable association of tmRNA with ribosomes. tmRNA and SmpB together mimic tRNA shape, replacing the anticodon stem-loop with SmpB. tmRNA is encoded by the ssrA gene; the 2 termini fold to resemble tRNA(Ala) and it encodes a 'tag peptide', a short internal open reading frame. During trans-translation Ala-aminoacylated tmRNA acts like a tRNA, entering the A-site of stalled ribosomes, displacing the stalled mRNA. The ribosome then switches to translate the ORF on the tmRNA; the nascent peptide is terminated with the 'tag peptide' encoded by the tmRNA and targeted for degradation. The ribosome is freed to recommence translation, which seems to be the essential function of trans-translation. The sequence is that of SsrA-binding protein from Nitratiruptor sp. (strain SB155-2).